A 226-amino-acid chain; its full sequence is 2-C-methyl-D-erythritol 4-phosphate cytidylyltransferase (226 aa).

It belongs to the IspD/TarI cytidylyltransferase family. IspD subfamily.

The enzyme catalyses 2-C-methyl-D-erythritol 4-phosphate + CTP + H(+) = 4-CDP-2-C-methyl-D-erythritol + diphosphate. It participates in isoprenoid biosynthesis; isopentenyl diphosphate biosynthesis via DXP pathway; isopentenyl diphosphate from 1-deoxy-D-xylulose 5-phosphate: step 2/6. In terms of biological role, catalyzes the formation of 4-diphosphocytidyl-2-C-methyl-D-erythritol from CTP and 2-C-methyl-D-erythritol 4-phosphate (MEP). This is 2-C-methyl-D-erythritol 4-phosphate cytidylyltransferase from Prochlorococcus marinus (strain SARG / CCMP1375 / SS120).